The following is a 137-amino-acid chain: MATNKSIKSVVICVLILGLVLEQVQVEGKSCCKNTTGRNCYNACHFAGGSRPVCATACGCKIISGPTCPRDYPKLNLLPESGEPNATEYCTIGCRTSVCDNMDNVSRGQEMKFDMGLCSNACARFCNDGDVIQSVEA.

The N-terminal stretch at 1–28 (MATNKSIKSVVICVLILGLVLEQVQVEG) is a signal peptide. 4 cysteine pairs are disulfide-bonded: cysteine 31-cysteine 68, cysteine 32-cysteine 60, cysteine 40-cysteine 58, and cysteine 44-cysteine 54. Residues 75–137 (LNLLPESGEP…DGDVIQSVEA (63 aa)) constitute a propeptide, acidic domain.

Belongs to the plant thionin (TC 1.C.44) family. 4 C-C subfamily.

The protein resides in the secreted. Thionins are small plant proteins which are toxic to animal cells. They seem to exert their toxic effect at the level of the cell membrane. Their precise function is not known. The sequence is that of Probable leaf thionin from Hordeum vulgare (Barley).